Consider the following 1086-residue polypeptide: NAD(P) transhydrogenase, mitochondrial (1086 aa).

Residues 1–43 (MANLLKTVVTGCSCPFLSNLGSCKVLPGKKNFLRAFHTHRILW) constitute a mitochondrion transit peptide. Topologically, residues 44-474 (CKAPVKPGIP…TITPFRKTMT (431 aa)) are mitochondrial matrix. Lys-70 carries the N6-acetyllysine modification. Lys-117 bears the N6-succinyllysine mark. 182-184 (RVT) contacts NAD(+). Position 224 is an N6-succinyllysine (Lys-224). NAD(+) is bound by residues Val-237, 257–259 (DTR), and Gly-287. Residue Lys-294 is modified to N6-succinyllysine. NAD(+) contacts are provided by Glu-300 and Leu-319. The residue at position 331 (Lys-331) is an N6-succinyllysine. Position 397 is an N6-acetyllysine (Lys-397). Helical transmembrane passes span 475–493 (SASV…GIAA), 501–521 (MVTT…GVTP), 527–546 (LMSV…LVLM), and 558–578 (GLAA…FLVT). Topologically, residues 579 to 595 (QRMLDMFKRPTDPPEYN) are mitochondrial matrix. 5 consecutive transmembrane segments (helical) span residues 596 to 616 (YLYL…LYSG), 622 to 642 (IMYL…STQG), 646 to 666 (LGNA…LGGL), 672 to 691 (LLAQ…LTIA), and 702 to 722 (LVAA…IAEY). Residues 723-739 (IIEYPHFATDAAANLTK) lie on the Cytoplasmic side of the membrane. 5 consecutive transmembrane segments (helical) span residues 740 to 760 (IVAY…LVAY), 778 to 797 (HLLN…PFMM), 801 to 819 (FTTG…AVMG), 833 to 853 (VVIT…GFLL), and 857 to 879 (LLTI…MCVA). Residues 880-1086 (MNRSLANVIL…QAKVRESYQK (207 aa)) are Mitochondrial matrix-facing. Residues Tyr-933, 965 to 970 (VAGRMP), 1007 to 1011 (GANDT), 1026 to 1027 (GM), 1042 to 1049 (KRSLGVGY), and 1068 to 1069 (DA) contribute to the NADP(+) site. Residue Lys-1079 is modified to N6-succinyllysine.

The protein in the N-terminal section; belongs to the AlaDH/PNT family. In the C-terminal section; belongs to the PNT beta subunit family. Homodimer.

It is found in the mitochondrion inner membrane. The catalysed reaction is NAD(+) + NADPH + H(+)(in) = NADH + NADP(+) + H(+)(out). In terms of biological role, the transhydrogenation between NADH and NADP is coupled to respiration and ATP hydrolysis and functions as a proton pump across the membrane. May play a role in reactive oxygen species (ROS) detoxification in the adrenal gland. This Ovis aries (Sheep) protein is NAD(P) transhydrogenase, mitochondrial (NNT).